Consider the following 159-residue polypeptide: NAD(P)H-quinone oxidoreductase subunit J, chloroplastic (159 aa).

The protein belongs to the complex I 30 kDa subunit family. As to quaternary structure, NDH is composed of at least 16 different subunits, 5 of which are encoded in the nucleus.

It is found in the plastid. Its subcellular location is the chloroplast thylakoid membrane. The enzyme catalyses a plastoquinone + NADH + (n+1) H(+)(in) = a plastoquinol + NAD(+) + n H(+)(out). It catalyses the reaction a plastoquinone + NADPH + (n+1) H(+)(in) = a plastoquinol + NADP(+) + n H(+)(out). In terms of biological role, NDH shuttles electrons from NAD(P)H:plastoquinone, via FMN and iron-sulfur (Fe-S) centers, to quinones in the photosynthetic chain and possibly in a chloroplast respiratory chain. The immediate electron acceptor for the enzyme in this species is believed to be plastoquinone. Couples the redox reaction to proton translocation, and thus conserves the redox energy in a proton gradient. The polypeptide is NAD(P)H-quinone oxidoreductase subunit J, chloroplastic (Brachypodium distachyon (Purple false brome)).